The sequence spans 476 residues: Angiotensinogen (476 aa).

Residues 1–24 (MAPAGVSLRATILCLVAWAGLAAG) form the signal peptide. N-linked (GlcNAc...) asparagine glycans are attached at residues Asn38, Asn161, Asn295, and Asn319. A disulfide bridge connects residues Cys42 and Cys162.

Belongs to the serpin family. Post-translationally, in response to low blood pressure, the enzyme renin/REN cleaves angiotensinogen to produce angiotensin-1. Angiotensin-1 is a substrate of ACE (angiotensin converting enzyme) that removes a dipeptide to yield the physiologically active peptide angiotensin-2. Angiotensin-1 and angiotensin-2 can be further processed to generate angiotensin-3, angiotensin-4. Angiotensin 1-9 is cleaved from angiotensin-1 by ACE2 and can be further processed by ACE to produce angiotensin 1-7, angiotensin 1-5 and angiotensin 1-4. Angiotensin 1-7 has also been proposed to be cleaved from angiotensin-2 by ACE2 or from angiotensin-1 by MME (neprilysin). In terms of processing, the disulfide bond is labile. Angiotensinogen is present in the circulation in a near 40:60 ratio with the oxidized disulfide-bonded form, which preferentially interacts with receptor-bound renin.

The protein localises to the secreted. Essential component of the renin-angiotensin system (RAS), a potent regulator of blood pressure, body fluid and electrolyte homeostasis. In terms of biological role, acts directly on vascular smooth muscle as a potent vasoconstrictor, affects cardiac contractility and heart rate through its action on the sympathetic nervous system, and alters renal sodium and water absorption through its ability to stimulate the zona glomerulosa cells of the adrenal cortex to synthesize and secrete aldosterone. Acts by binding to angiotensin receptors AGTR1 and AGTR2. Also binds the DEAR/FBXW7-AS1 receptor. Functionally, stimulates aldosterone release. Its function is as follows. Is a ligand for the G-protein coupled receptor MAS1. Has vasodilator and antidiuretic effects. Has an antithrombotic effect that involves MAS1-mediated release of nitric oxide from platelets. This Pan troglodytes (Chimpanzee) protein is Angiotensinogen (AGT).